We begin with the raw amino-acid sequence, 179 residues long: uncharacterized protein (179 aa).

2 disordered regions span residues 26 to 103 (LSAV…SYED) and 136 to 179 (KHKA…SWFN). Positions 34–61 (QQGKNEEQRQHDEWVAERNREIQQEKQR) are enriched in basic and acidic residues. Residues 63–79 (ANAQAAANKRAATAAAN) are compositionally biased toward low complexity. Basic and acidic residues-rich tracts occupy residues 82 to 103 (ARQDKLDAEASADKKRDQSYED) and 158 to 179 (GGRDLMKSVGKAEENKSDSWFN).

This is an uncharacterized protein from Escherichia coli (strain K12).